We begin with the raw amino-acid sequence, 437 residues long: tRNA-2-methylthio-N(6)-dimethylallyladenosine synthase (437 aa).

The MTTase N-terminal domain maps to 1–115; it reads MKVYIETMGC…ISQVIHKEKA (115 aa). Cys-10, Cys-46, Cys-78, Cys-148, Cys-152, and Cys-155 together coordinate [4Fe-4S] cluster. In terms of domain architecture, Radical SAM core spans 134–367; that stretch reads KKAQIRSLLN…QNRHKEILEE (234 aa). The region spanning 370–436 is the TRAM domain; that stretch reads KLEVGKTHVV…KGRLIAAIKG (67 aa).

It belongs to the methylthiotransferase family. MiaB subfamily. As to quaternary structure, monomer. [4Fe-4S] cluster is required as a cofactor.

It localises to the cytoplasm. It catalyses the reaction N(6)-dimethylallyladenosine(37) in tRNA + (sulfur carrier)-SH + AH2 + 2 S-adenosyl-L-methionine = 2-methylsulfanyl-N(6)-dimethylallyladenosine(37) in tRNA + (sulfur carrier)-H + 5'-deoxyadenosine + L-methionine + A + S-adenosyl-L-homocysteine + 2 H(+). Catalyzes the methylthiolation of N6-(dimethylallyl)adenosine (i(6)A), leading to the formation of 2-methylthio-N6-(dimethylallyl)adenosine (ms(2)i(6)A) at position 37 in tRNAs that read codons beginning with uridine. The protein is tRNA-2-methylthio-N(6)-dimethylallyladenosine synthase of Helicobacter pylori (strain P12).